A 488-amino-acid polypeptide reads, in one-letter code: 3-octaprenyl-4-hydroxybenzoate carboxy-lyase (488 aa).

N172 contacts Mn(2+). Residues 175–177 (IYR), 189–191 (RWL), and 194–195 (RG) contribute to the prenylated FMN site. E238 is a binding site for Mn(2+). D287 acts as the Proton donor in catalysis.

It belongs to the UbiD family. Homohexamer. It depends on prenylated FMN as a cofactor. Mn(2+) serves as cofactor.

It localises to the cell membrane. It carries out the reaction a 4-hydroxy-3-(all-trans-polyprenyl)benzoate + H(+) = a 2-(all-trans-polyprenyl)phenol + CO2. The protein operates within cofactor biosynthesis; ubiquinone biosynthesis. In terms of biological role, catalyzes the decarboxylation of 3-octaprenyl-4-hydroxy benzoate to 2-octaprenylphenol, an intermediate step in ubiquinone biosynthesis. The sequence is that of 3-octaprenyl-4-hydroxybenzoate carboxy-lyase from Stutzerimonas stutzeri (strain A1501) (Pseudomonas stutzeri).